We begin with the raw amino-acid sequence, 68 residues long: Antimicrobial peptide VpCT3 (68 aa).

Residues 1 to 23 form the signal peptide; it reads MKTQIVILIVAVLVLQLVSQSDA. Leu-36 is subject to Leucine amide. Positions 37–68 are excised as a propeptide; the sequence is GKRGLKNLDQYNDLFDGEISDADIKFLQDLMR.

The protein belongs to the non-disulfide-bridged peptide (NDBP) superfamily. Short antimicrobial peptide (group 4) family. As to expression, expressed by the venom gland.

The protein resides in the secreted. The protein localises to the target cell membrane. Antimicrobial peptide with weak activity against all bacteria tested (MIC&gt;100 uM) and all yeasts tested (MIC&gt;200 uM). Also provokes weak hemolysis on human erythrocytes (HC(50)=83.7 uM). In Mesomexovis punctatus (Scorpion), this protein is Antimicrobial peptide VpCT3.